Here is a 95-residue protein sequence, read N- to C-terminus: Putative membrane protein insertion efficiency factor (95 aa).

Residues 72–95 (FDPVPDAPTSPSPSSSCSCKGPHP) form a disordered region. Residues 83-95 (SPSSSCSCKGPHP) are compositionally biased toward low complexity.

Belongs to the UPF0161 family.

It localises to the cell inner membrane. Its function is as follows. Could be involved in insertion of integral membrane proteins into the membrane. In Xanthomonas axonopodis pv. citri (strain 306), this protein is Putative membrane protein insertion efficiency factor.